The sequence spans 493 residues: Protein dml1 (493 aa).

Belongs to the misato family.

It localises to the mitochondrion. Functionally, involved in the partitioning of the mitochondrial organelle and mitochondrial DNA (mtDNA) inheritance. The sequence is that of Protein dml1 (dml1) from Aspergillus oryzae (strain ATCC 42149 / RIB 40) (Yellow koji mold).